The chain runs to 349 residues: 2-oxoglutarate-Fe(II) type oxidoreductase ppzD (349 aa).

In terms of domain architecture, Fe2OG dioxygenase spans 200–311 (NTSELRLNHY…RYSVAYFGKP (112 aa)). Fe cation is bound by residues His-227, Asp-229, and His-287. Arg-302 contributes to the 2-oxoglutarate binding site.

It belongs to the iron/ascorbate-dependent oxidoreductase family. Requires Fe(2+) as cofactor.

The catalysed reaction is L-proline + 2-oxoglutarate + O2 = trans-4-hydroxy-L-proline + succinate + CO2. It carries out the reaction L-proline + 2-oxoglutarate + O2 = trans-3-hydroxy-L-proline + succinate + CO2. The enzyme catalyses D-proline + 2-oxoglutarate + O2 = cis-4-hydroxy-D-proline + succinate + CO2. The protein operates within secondary metabolite biosynthesis. Functionally, 2-oxoglutarate-Fe(II) type oxidoreductase; part of the gene cluster that mediates the biosynthesis of pyrrolopyrazines, secondary metabolites showing insecticidal activity. Within the pathway, ppzD converts L-proline into trans-4-hydroxy-L-proline as a major product, yielding a key precursor for peramine biosynthesis. PpzD is also able to convert L-proline into trans-3-hydroxy-L-proline. The single multifunctional NRPS ppzA is sufficient to produce peramine via condensation of 1-pyrroline-5-carboxylate and arginine, N-methylation of the alpha-amino group of arginine and reduction of the thioester and the cyclization to form an iminium ion resulting in release from the peptide synthetase. Deprotonation of this intermediate and oxidation of the pyrroline ring would give rise to peramine. In Epichloe species that produce only peramine, the peramine synthetase gene is not localized in a gene cluster, in contrast to Metarhizium species that contain additional pyrrolopyrazine biosynthesis genes. The 2-oxoglutarate-Fe(II) type oxidoreductase ppzC hydroxylates peramine to yield the newly identified compound 8-hydroxyperamine whereas ppzD converts L-proline into trans-4-hydroxy-L-proline, a precursor of peramine biosynthesis. This is 2-oxoglutarate-Fe(II) type oxidoreductase ppzD (ppzD) from Metarhizium majus (strain ARSEF 297).